The primary structure comprises 39 residues: Photosystem II reaction center protein Y (39 aa).

A helical membrane pass occupies residues 5–23 (VLIVLTPLLIAGGWAVFNI).

It belongs to the PsbY family. In terms of assembly, PSII is composed of 1 copy each of membrane proteins PsbA, PsbB, PsbC, PsbD, PsbE, PsbF, PsbH, PsbI, PsbJ, PsbK, PsbL, PsbM, PsbT, PsbX, PsbY, PsbZ, Psb30/Ycf12, peripheral proteins PsbO, CyanoQ (PsbQ), PsbU, PsbV and a large number of cofactors. It forms dimeric complexes.

The protein resides in the cellular thylakoid membrane. Its function is as follows. Loosely associated component of the core of photosystem II (PSII), it is not always seen in crystals. PSII is a light-driven water plastoquinone oxidoreductase, using light energy to abstract electrons from H(2)O, generating a proton gradient subsequently used for ATP formation. This chain is Photosystem II reaction center protein Y, found in Microcystis aeruginosa (strain NIES-843 / IAM M-2473).